The sequence spans 382 residues: Gap junction alpha-1 protein (382 aa).

Topologically, residues 2 to 23 (GDWSALGKLLDKVQAYSTAGGK) are cytoplasmic. Position 5 is a phosphoserine (Ser-5). The chain crosses the membrane as a helical span at residues 24 to 44 (VWLSVLFIFRILLLGTAVESA). Residues 45–76 (WGDEQSAFRCNTQQPGCENVCYDKSFPISHVR) are Extracellular-facing. 2 disulfides stabilise this stretch: Cys-54/Cys-192 and Cys-187/Cys-198. Residues 77–97 (FWVLQIIFVSVPTLLYLAHVF) form a helical membrane-spanning segment. Residues 98-155 (YVMRKEEKLNKKEEELKVAQTDGVNVDMHLKQIEIKKFKYGIEEHGKVKMRGGLLRTY) are Cytoplasmic-facing. Lys-144 participates in a covalent cross-link: Glycyl lysine isopeptide (Lys-Gly) (interchain with G-Cter in SUMO). The helical transmembrane segment at 156-176 (IISILFKSIFEVAFLLIQWYI) threads the bilayer. Over 177–207 (YGFSLSAVYTCKRDPCPHQVDCFLSRPTEKT) the chain is Extracellular. A helical membrane pass occupies residues 208–228 (IFIIFMLVVSLVSLALNIIEL). Topologically, residues 229–382 (FYVFFKGVKD…SRPRPDDLEI (154 aa)) are cytoplasmic. Residue Lys-237 forms a Glycyl lysine isopeptide (Lys-Gly) (interchain with G-Cter in SUMO) linkage. The interaction with NOV stretch occupies residues 244-382 (SDPYHATSGA…SRPRPDDLEI (139 aa)). Position 247 is a phosphotyrosine (Tyr-247). A phosphoserine mark is found at Ser-255 and Ser-262. Residues 264-382 (KYAYFNGCSS…SRPRPDDLEI (119 aa)) are interaction with UBQLN4. Cys-271 bears the S-nitrosocysteine mark. Phosphothreonine is present on Thr-275. Residues Ser-306 and Ser-314 each carry the phosphoserine modification. Positions 317–332 (QNRMGQAGSTISNSHA) are enriched in polar residues. Residues 317–382 (QNRMGQAGST…SRPRPDDLEI (66 aa)) are disordered. Position 325 is a phosphoserine; by CK1 (Ser-325). At Thr-326 the chain carries Phosphothreonine. Phosphoserine; by CK1 is present on residues Ser-328 and Ser-330. Ser-344 and Ser-365 each carry phosphoserine. Low complexity predominate over residues 362–374 (RPSSRASSRASSR). Ser-368 bears the Phosphoserine; by PKC/PRKCG and PKC/PRKCD mark. Residues Ser-369 and Ser-373 each carry the phosphoserine modification.

Belongs to the connexin family. Alpha-type (group II) subfamily. A connexon is composed of a hexamer of connexins. Interacts (via C-terminus) with TJP1. Interacts (via C-terminus) with SRC (via SH3 domain). Interacts (not ubiquitinated) with UBQLN4 (via UBA domain). Interacts with SGSM3 and CNST. Interacts with RIC1/CIP150. Interacts with CSNK1D. Interacts with NOV. Interacts with TMEM65. Interacts with ANK3/ANKG and PKP2. Phosphorylated at Ser-368 by PRKCG; phosphorylation induces disassembly of gap junction plaques and inhibition of gap junction activity. Phosphorylation at Ser-325, Ser-328 and Ser-330 by CK1 modulates gap junction assembly. Phosphorylation at Ser-368 by PRKCD triggers its internalization into small vesicles leading to proteasome-mediated degradation. In terms of processing, sumoylated with SUMO1, SUMO2 and SUMO3, which may regulate the level of functional Cx43 gap junctions at the plasma membrane. May be desumoylated by SENP1 or SENP2. Post-translationally, S-nitrosylation at Cys-271 is enriched at the muscle endothelial gap junction in arteries, it augments channel permeability and may regulate of smooth muscle cell to endothelial cell communication. Acetylated in the developing cortex; leading to delocalization from the cell membrane. Expressed at intercalated disks in the heart (at protein level). Expressed in the fetal cochlea.

The protein localises to the cell membrane. It localises to the cell junction. The protein resides in the gap junction. Its subcellular location is the endoplasmic reticulum. In terms of biological role, gap junction protein that acts as a regulator of bladder capacity. A gap junction consists of a cluster of closely packed pairs of transmembrane channels, the connexons, through which materials of low MW diffuse from one cell to a neighboring cell. May play a critical role in the physiology of hearing by participating in the recycling of potassium to the cochlear endolymph. Negative regulator of bladder functional capacity: acts by enhancing intercellular electrical and chemical transmission, thus sensitizing bladder muscles to cholinergic neural stimuli and causing them to contract. May play a role in cell growth inhibition through the regulation of NOV expression and localization. Plays an essential role in gap junction communication in the ventricles. This Homo sapiens (Human) protein is Gap junction alpha-1 protein (GJA1).